A 943-amino-acid chain; its full sequence is Isoleucine--tRNA ligase (943 aa).

The 'HIGH' region signature appears at 59 to 69; sequence PYANGQIHLGH. Glu577 is a binding site for L-isoleucyl-5'-AMP. The 'KMSKS' region signature appears at 618-622; the sequence is KMSKS. An ATP-binding site is contributed by Lys621. Zn(2+) is bound by residues Cys906, Cys909, Cys926, and Cys929.

The protein belongs to the class-I aminoacyl-tRNA synthetase family. IleS type 1 subfamily. Monomer. The cofactor is Zn(2+).

The protein localises to the cytoplasm. The catalysed reaction is tRNA(Ile) + L-isoleucine + ATP = L-isoleucyl-tRNA(Ile) + AMP + diphosphate. Catalyzes the attachment of isoleucine to tRNA(Ile). As IleRS can inadvertently accommodate and process structurally similar amino acids such as valine, to avoid such errors it has two additional distinct tRNA(Ile)-dependent editing activities. One activity is designated as 'pretransfer' editing and involves the hydrolysis of activated Val-AMP. The other activity is designated 'posttransfer' editing and involves deacylation of mischarged Val-tRNA(Ile). The sequence is that of Isoleucine--tRNA ligase from Xylella fastidiosa (strain M12).